A 205-amino-acid chain; its full sequence is MSYAYRFKYIIIGDTGVGKSCLLLKFTDKRFQAVHDLTIGVEFGAKTITIDNKPIKLQIWDTAGQESFRSVTRSYYRGRAGTLLVYDITRRETFNHLASWLEEARQHASENMTTMLIGNKCDLEDKRTVSTEEGEQFAREHGLIFMEASAKTAHNVEEAFVETAATIYKRIQDGVVDEANEPGITPGPFGGKDASSSQQRRGCCG.

Position 13–20 (13–20) interacts with GTP; sequence GDTGVGKS. The Effector region signature appears at 35–43; it reads HDLTIGVEF. GTP-binding positions include 61-65, 119-122, and 149-150; these read DTAGQ, NKCD, and SA. The tract at residues 179–205 is disordered; sequence ANEPGITPGPFGGKDASSSQQRRGCCG. Polar residues predominate over residues 194 to 205; sequence ASSSQQRRGCCG. S-geranylgeranyl cysteine attachment occurs at residues C203 and C204.

This sequence belongs to the small GTPase superfamily. Rab family.

The protein resides in the cell membrane. In terms of biological role, intracellular vesicle trafficking and protein transport. The protein is Ras-related protein RABB1a (RABB1A) of Arabidopsis thaliana (Mouse-ear cress).